Reading from the N-terminus, the 216-residue chain is Adenylate kinase (216 aa).

An ATP-binding site is contributed by 10–15 (GAGKGT). The tract at residues 30–59 (STGDIFRYNIKQGTELGKKAKSYMDQGLLV) is NMP. AMP contacts are provided by residues Thr31, Arg36, 57 to 59 (LLV), 85 to 88 (GFPR), and Gln92. The segment at 126 to 163 (GRRICRECGATFHVQYNPSTKGALCDQCGGELYQRDDD) is LID. Arg127 provides a ligand contact to ATP. The Zn(2+) site is built by Cys130 and Cys133. Residue 136 to 137 (TF) coordinates ATP. 2 residues coordinate Zn(2+): Cys150 and Cys153. The AMP site is built by Arg160 and Arg171. Lys199 provides a ligand contact to ATP.

Belongs to the adenylate kinase family. Monomer.

Its subcellular location is the cytoplasm. The enzyme catalyses AMP + ATP = 2 ADP. It participates in purine metabolism; AMP biosynthesis via salvage pathway; AMP from ADP: step 1/1. Functionally, catalyzes the reversible transfer of the terminal phosphate group between ATP and AMP. Plays an important role in cellular energy homeostasis and in adenine nucleotide metabolism. The polypeptide is Adenylate kinase (Alkaliphilus oremlandii (strain OhILAs) (Clostridium oremlandii (strain OhILAs))).